A 178-amino-acid chain; its full sequence is Peptide methionine sulfoxide reductase MsrA (178 aa).

Residue C11 is part of the active site.

The protein belongs to the MsrA Met sulfoxide reductase family.

The enzyme catalyses L-methionyl-[protein] + [thioredoxin]-disulfide + H2O = L-methionyl-(S)-S-oxide-[protein] + [thioredoxin]-dithiol. It carries out the reaction [thioredoxin]-disulfide + L-methionine + H2O = L-methionine (S)-S-oxide + [thioredoxin]-dithiol. In terms of biological role, has an important function as a repair enzyme for proteins that have been inactivated by oxidation. Catalyzes the reversible oxidation-reduction of methionine sulfoxide in proteins to methionine. The protein is Peptide methionine sulfoxide reductase MsrA of Natronomonas pharaonis (strain ATCC 35678 / DSM 2160 / CIP 103997 / JCM 8858 / NBRC 14720 / NCIMB 2260 / Gabara) (Halobacterium pharaonis).